Consider the following 200-residue polypeptide: Holliday junction branch migration complex subunit RuvA (200 aa).

Residues 1 to 64 (MITSIQGTLV…EDSQTLYGFA (64 aa)) form a domain I region. The segment at 65–144 (SPAERDFFRL…ATGAAPGLAT (80 aa)) is domain II. Residues 145 to 151 (QPAAAAS) are flexible linker. The tract at residues 152 to 200 (PGASAHRDAVAALVALGYRSADADEAVRRASLALGEAATTESLIKKALS) is domain III.

Belongs to the RuvA family. In terms of assembly, homotetramer. Forms an RuvA(8)-RuvB(12)-Holliday junction (HJ) complex. HJ DNA is sandwiched between 2 RuvA tetramers; dsDNA enters through RuvA and exits via RuvB. An RuvB hexamer assembles on each DNA strand where it exits the tetramer. Each RuvB hexamer is contacted by two RuvA subunits (via domain III) on 2 adjacent RuvB subunits; this complex drives branch migration. In the full resolvosome a probable DNA-RuvA(4)-RuvB(12)-RuvC(2) complex forms which resolves the HJ.

The protein localises to the cytoplasm. In terms of biological role, the RuvA-RuvB-RuvC complex processes Holliday junction (HJ) DNA during genetic recombination and DNA repair, while the RuvA-RuvB complex plays an important role in the rescue of blocked DNA replication forks via replication fork reversal (RFR). RuvA specifically binds to HJ cruciform DNA, conferring on it an open structure. The RuvB hexamer acts as an ATP-dependent pump, pulling dsDNA into and through the RuvAB complex. HJ branch migration allows RuvC to scan DNA until it finds its consensus sequence, where it cleaves and resolves the cruciform DNA. In Opitutus terrae (strain DSM 11246 / JCM 15787 / PB90-1), this protein is Holliday junction branch migration complex subunit RuvA.